A 553-amino-acid chain; its full sequence is Putative transport protein YidE (553 aa).

A run of 5 helical transmembrane segments spans residues 4–24, 28–48, 65–85, 95–115, and 158–178; these read IALT…IGNV, GIGL…HFVS, FGLI…FFAS, LFAV…HKLF, and MSYA…MWML. RCK C-terminal domains lie at 191–276 and 279–361; these read QQHE…VIGQ and DTSL…VLGN. Helical transmembrane passes span 371–391, 393–413, 439–459, 464–484, 493–513, and 533–553; these read MLPV…PVFV, GFPA…ALIL, IVLF…NTLV, LSWI…VGIL, YLTM…LAFA, and LVMF…WSIG.

This sequence belongs to the AAE transporter (TC 2.A.81) family. YidE subfamily.

It is found in the cell membrane. This is Putative transport protein YidE from Escherichia coli (strain ATCC 8739 / DSM 1576 / NBRC 3972 / NCIMB 8545 / WDCM 00012 / Crooks).